A 216-amino-acid chain; its full sequence is Thymidylate kinase (216 aa).

Residue 10-17 coordinates ATP; the sequence is GVDGSGKT.

This sequence belongs to the thymidylate kinase family.

It catalyses the reaction dTMP + ATP = dTDP + ADP. Phosphorylation of dTMP to form dTDP in both de novo and salvage pathways of dTTP synthesis. This Pelotomaculum thermopropionicum (strain DSM 13744 / JCM 10971 / SI) protein is Thymidylate kinase.